The following is a 129-amino-acid chain: Small ribosomal subunit protein uS11 (129 aa).

Belongs to the universal ribosomal protein uS11 family. As to quaternary structure, part of the 30S ribosomal subunit. Interacts with proteins S7 and S18. Binds to IF-3.

In terms of biological role, located on the platform of the 30S subunit, it bridges several disparate RNA helices of the 16S rRNA. Forms part of the Shine-Dalgarno cleft in the 70S ribosome. The chain is Small ribosomal subunit protein uS11 from Idiomarina loihiensis (strain ATCC BAA-735 / DSM 15497 / L2-TR).